The following is a 157-amino-acid chain: Ribosomal RNA large subunit methyltransferase H (157 aa).

Residues Leu73, Gly105, and 124–129 (LSKMTF) each bind S-adenosyl-L-methionine.

Belongs to the RNA methyltransferase RlmH family. Homodimer.

The protein resides in the cytoplasm. The catalysed reaction is pseudouridine(1915) in 23S rRNA + S-adenosyl-L-methionine = N(3)-methylpseudouridine(1915) in 23S rRNA + S-adenosyl-L-homocysteine + H(+). Specifically methylates the pseudouridine at position 1915 (m3Psi1915) in 23S rRNA. This is Ribosomal RNA large subunit methyltransferase H from Christiangramia forsetii (strain DSM 17595 / CGMCC 1.15422 / KT0803) (Gramella forsetii).